A 256-amino-acid chain; its full sequence is Imidazole glycerol phosphate synthase subunit HisF (256 aa).

Catalysis depends on residues Asp12 and Asp131.

It belongs to the HisA/HisF family. As to quaternary structure, heterodimer of HisH and HisF.

The protein resides in the cytoplasm. It catalyses the reaction 5-[(5-phospho-1-deoxy-D-ribulos-1-ylimino)methylamino]-1-(5-phospho-beta-D-ribosyl)imidazole-4-carboxamide + L-glutamine = D-erythro-1-(imidazol-4-yl)glycerol 3-phosphate + 5-amino-1-(5-phospho-beta-D-ribosyl)imidazole-4-carboxamide + L-glutamate + H(+). It participates in amino-acid biosynthesis; L-histidine biosynthesis; L-histidine from 5-phospho-alpha-D-ribose 1-diphosphate: step 5/9. Its function is as follows. IGPS catalyzes the conversion of PRFAR and glutamine to IGP, AICAR and glutamate. The HisF subunit catalyzes the cyclization activity that produces IGP and AICAR from PRFAR using the ammonia provided by the HisH subunit. The protein is Imidazole glycerol phosphate synthase subunit HisF of Azotobacter vinelandii (strain DJ / ATCC BAA-1303).